Here is a 721-residue protein sequence, read N- to C-terminus: Ophiobolin F synthase oblA (721 aa).

Residues 5-325 form a (7Z)-ophiobola-7,19-dien-3-ol synthase region; that stretch reads YDQPYSVLLD…RYNLKAEWNE (321 aa). 2 residues coordinate Mg(2+): Asp97 and Asp101. Position 97 (Asp97) interacts with substrate. Residues 97-101 carry the DDXXD 1 motif; sequence DDVID. Residues 185 to 188, Asn229, 233 to 237, and 316 to 317 contribute to the substrate site; these read RSLD, SFEKE, and RY. The NSE/DTE signature appears at 229 to 237; that stretch reads NDLFSFEKE. The interval 326 to 721 is geranylfarnesyl diphosphate synthase; that stretch reads LQMLRAKHGV…LRLMMEMLKV (396 aa). Residues 348 to 387 are disordered; sequence SMDHIWKKGSTQGESKGEKRKRQSVNGTNGVNGTNGVKKP. The segment covering 372 to 384 has biased composition (low complexity); it reads VNGTNGVNGTNGV. Isopentenyl diphosphate contacts are provided by Lys432, Arg435, and His464. Residues Asp471 and Asp475 each contribute to the Mg(2+) site. The DDXXD 2 motif lies at 471 to 475; the sequence is DDLED. Residue Arg480 participates in dimethylallyl diphosphate binding. An isopentenyl diphosphate-binding site is contributed by Arg481. Residues Lys558, Thr559, Gln597, Asn604, Lys614, and Lys624 each contribute to the dimethylallyl diphosphate site.

In the N-terminal section; belongs to the terpene synthase family. The protein in the C-terminal section; belongs to the FPP/GGPP synthase family. Requires Mg(2+) as cofactor.

It catalyses the reaction isopentenyl diphosphate + (2E,6E)-farnesyl diphosphate = (2E,6E,10E)-geranylgeranyl diphosphate + diphosphate. The enzyme catalyses isopentenyl diphosphate + (2E,6E,10E)-geranylgeranyl diphosphate = (2E,6E,10E,14E)-geranylfarnesyl diphosphate + diphosphate. It carries out the reaction (2E,6E,10E,14E)-geranylfarnesyl diphosphate + H2O = ophiobolin F + diphosphate. It functions in the pathway secondary metabolite biosynthesis; terpenoid biosynthesis. Bifunctional sesterterpene synthase; part of the gene cluster that mediates the biosynthesis of the sesterterpenes ophiobolins, fungal phytotoxins with potential anti-cancer activities. The first step of the pathway is performed by the sesterterpene synthase oblA that possesses both prenyl transferase and terpene cyclase activity, converting isopentenyl diphosphate and dimethylallyl diphosphate into geranylfarnesyl diphosphate (GFPP) and further converting GFPP into ophiobolin F, respectively. Other sesterterpenoids (C(25) terpenoids) are found as minor products of oblA. The cytochrome P450 monooxygenase oblB then catalyzes a four-step oxidative transformation of ophiobolin F to yield ophiobolin C. The FAD-dependent oxidoreductase oblC might be involved in a later oxidation step that produces ophiobolin A. In Cochliobolus heterostrophus (strain C5 / ATCC 48332 / race O) (Southern corn leaf blight fungus), this protein is Ophiobolin F synthase oblA.